The primary structure comprises 199 residues: IMP cyclohydrolase (199 aa).

It belongs to the archaeal IMP cyclohydrolase family.

The catalysed reaction is IMP + H2O = 5-formamido-1-(5-phospho-D-ribosyl)imidazole-4-carboxamide. The protein operates within purine metabolism; IMP biosynthesis via de novo pathway; IMP from 5-formamido-1-(5-phospho-D-ribosyl)imidazole-4-carboxamide: step 1/1. In terms of biological role, catalyzes the cyclization of 5-formylamidoimidazole-4-carboxamide ribonucleotide to IMP. In Methanothrix thermoacetophila (strain DSM 6194 / JCM 14653 / NBRC 101360 / PT) (Methanosaeta thermophila), this protein is IMP cyclohydrolase.